Consider the following 690-residue polypeptide: Eukaryotic translation initiation factor 3 subunit B (690 aa).

Residues 1–11 (MAKKKSEDHSG) are compositionally biased toward basic and acidic residues. The segment at 1-33 (MAKKKSEDHSGADANDSDYNEEPNFDDPPNFVD) is disordered. Residues 15 to 25 (NDSDYNEEPNF) are compositionally biased toward acidic residues. The 85-residue stretch at 57–141 (SVVVVDNMPK…YTFAVNLFTD (85 aa)) folds into the RRM domain. WD repeat units lie at residues 207–246 (TRER…KIQK), 292–331 (GDGM…LLDL), 334–369 (IKIP…TLMK), 442–484 (EIRE…KPSL), and 530–575 (PDHF…IKRT). Positions 613 to 646 (EQKDRLRLTRASKELLEKRAQLRETFMEYRNKRI) form a coiled coil.

The protein belongs to the eIF-3 subunit B family. Component of the eukaryotic translation initiation factor 3 (eIF-3) complex. The eIF-3 complex interacts with pix. Interacts with mxt.

The protein localises to the cytoplasm. RNA-binding component of the eukaryotic translation initiation factor 3 (eIF-3) complex, which is involved in protein synthesis of a specialized repertoire of mRNAs and, together with other initiation factors, stimulates binding of mRNA and methionyl-tRNAi to the 40S ribosome. The eIF-3 complex specifically targets and initiates translation of a subset of mRNAs involved in cell proliferation. In Drosophila grimshawi (Hawaiian fruit fly), this protein is Eukaryotic translation initiation factor 3 subunit B.